We begin with the raw amino-acid sequence, 1102 residues long: MHRRSSGSPVEDDAEDSLSSRIPPEPSNGPNVVDTPEKSRSQVARTGTSIDLRRDATGASTPRSRNSSMWRTPPSSSMTSNPPDCKSSSVMMPLASQRLPIEASPDHQRRYRPSRLRSPWPCSILTAFTTLVASIFLFFILRSFALRQTGGDGCGVPVMSPTFIRMVGFDTEHTRFASKYNLYLYREGGVDPYSQENLGLNGVPVLFLPGNAGSYRQVRSLAAEASRHYYDVVRHDEDRLNAGTRSLDFFMIDFNEDMAAFHGQTLLDQAEYVNEAVAYILSLYHDPRRSRRDPELPDPSAVVLVGHSMGGIVARTALTMTNYQANSVNTIVTMSAPHAKPPVSFDSDIVQTYKQINDYWREAYSQTWANDNPLWHVTLISIAGGSRDTVVPSDYASISSLVPETHGFTVFTSTIPDVWIGMDHLSITWCDQFRKAIIKSLFEVVDVRRATQTKPRAERMRIFKKWYLTGMETVAERTLPRKGVSGKKFTLLTNQQFDKSGDHGSLEVLFCSVFPLQNGKPATAFSMNMDFSGGTSGSTRLACKNAAEDGIHLPASTPSSKRPYDRVQPFSYLQYDLEDLAEHQFVAVVDKANSPTKGFVLAEFSDSSDSVIRARLGLGSLLSAGLKVRLPANRPMLTELQIPAVHSSLLDYRLKIIRKNHGQQQELFAPLLRQSVADPHESKFFVNVKNVNVNLHGLAPFMPPPLREQATLGGVSFHLWTDPSCDSTIDISLSVDIAGSLGELVMRYRTVFAAFPLLVVALVMRKQFQVYDETGYFITFAEGLDSALRSSLPMLLLAMSLLASSLATSTKLPPTDDPFHWRTNSTESPIDFTKNDLLLGSQDAFFWFLVPIFGLISVGVCLVINYVALALIFLLTSIYGFLRSKSGYIRRDEKGNLPIFSSASPRRRLVNSAILLALVSTVIPYQFAYMVACIVQLATSVRASWHAKEAKSTTHYNFANFAYSIFLLMLWILPINALVLLVWAHNLVVHWFMPFSSHHNVLSIMPFVLLVEAMTTGTMIPRVTTRFKHVTSMLFFFIAIYSAIYGVSYAYLLHHLTNILAAWLVGIYFSASGFSLSRLWRVLEGDEAVQNPASGSHTKKKP.

The tract at residues 1–90 is disordered; the sequence is MHRRSSGSPV…NPPDCKSSSV (90 aa). Residues 58–70 show a composition bias toward polar residues; it reads GASTPRSRNSSMW. Residue N66 is glycosylated (N-linked (GlcNAc...) asparagine). Over residues 72–83 the composition is skewed to low complexity; sequence TPPSSSMTSNPP. A helical membrane pass occupies residues 121–141; that stretch reads PCSILTAFTTLVASIFLFFIL. The active site involves S308. The next 2 membrane-spanning stretches (helical) occupy residues 744-764 and 790-810; these read LVMR…ALVM and SSLP…ATST. The N-linked (GlcNAc...) asparagine glycan is linked to N824. A run of 6 helical transmembrane segments spans residues 867–887, 914–934, 964–984, 1001–1021, 1033–1053, and 1056–1076; these read VALA…SKSG, ILLA…VACI, SIFL…LVWA, VLSI…TMIP, MLFF…AYLL, and LTNI…GFSL.

The protein belongs to the GPI inositol-deacylase family.

The protein localises to the endoplasmic reticulum membrane. In terms of biological role, involved in inositol deacylation of GPI-anchored proteins which plays important roles in the quality control and ER-associated degradation of GPI-anchored proteins. The polypeptide is GPI inositol-deacylase (bst1) (Aspergillus oryzae (strain ATCC 42149 / RIB 40) (Yellow koji mold)).